The chain runs to 130 residues: Small ribosomal subunit protein uS9 (130 aa).

A disordered region spans residues S108–R130. The segment covering V116–R130 has biased composition (basic residues).

The protein belongs to the universal ribosomal protein uS9 family.

The protein is Small ribosomal subunit protein uS9 of Cellvibrio japonicus (strain Ueda107) (Pseudomonas fluorescens subsp. cellulosa).